The primary structure comprises 519 residues: Keratin, type II cytoskeletal 1b (519 aa).

The interval 1 to 166 (MSRQFSSQSA…DPEIQKIKTQ (166 aa)) is head. Arginine 81 and arginine 95 each carry omega-N-methylarginine. A coil 1A region spans residues 167–202 (EREQIKTLNNKFASFIDKVRFLEQQNQVLQTKWELL). Residues 167–480 (EREQIKTLNN…ELLEGEESRM (314 aa)) form the IF rod domain. The segment at 203–221 (QQVNTSTRTSSLEPIFEEF) is linker 1. The segment at 222 to 313 (INQLQRQVDV…YLFDTELSQI (92 aa)) is coil 1B. Residues 314–337 (QTHVSDTNVILSMDNNRSLDLDSI) form a linker 12 region. The coil 2 stretch occupies residues 338-476 (INAVRTQYEL…ATYRELLEGE (139 aa)). Residues 477-519 (ESRMSGALQSQVSIWALPSNEGNDLGERLHDPQSQVPVPKLGC) form a tail region. The tract at residues 499 to 519 (NDLGERLHDPQSQVPVPKLGC) is disordered.

It belongs to the intermediate filament family. Post-translationally, undergoes deimination of some arginine residues (citrullination).

The chain is Keratin, type II cytoskeletal 1b (Krt77) from Rattus norvegicus (Rat).